A 400-amino-acid chain; its full sequence is Tyrosine-specific transport system 1 (400 aa).

The next 12 membrane-spanning stretches (helical) occupy residues 5–25 (VGST…AMPL), 34–54 (FTLV…LLFV), 80–100 (IIAT…YISG), 117–137 (VSVL…THSV), 143–163 (VLFF…LPEI), 176–196 (ALII…GSIP), 211–231 (FSIL…QLST), 250–270 (LNGL…ASAV), 273–293 (FSTL…LECI), 313–333 (LTFI…ILAL), 335–355 (YAGQ…VWKA), and 370–390 (NLTL…PFAI).

This sequence belongs to the amino acid/polyamine transporter 2 family. Mtr/TnaB/TyrP permease subfamily.

It localises to the cell inner membrane. The catalysed reaction is L-tyrosine(in) + H(+)(in) = L-tyrosine(out) + H(+)(out). Transports tyrosine across the cytoplasmic membrane. The transport system is energized by the proton motive force. This is Tyrosine-specific transport system 1 (tyrP-A) from Haemophilus influenzae (strain ATCC 51907 / DSM 11121 / KW20 / Rd).